The following is a 269-amino-acid chain: Hydroxyethylthiazole kinase (269 aa).

Met46 contacts substrate. Positions 122 and 168 each coordinate ATP. Gly195 contributes to the substrate binding site.

Belongs to the Thz kinase family. It depends on Mg(2+) as a cofactor.

The catalysed reaction is 5-(2-hydroxyethyl)-4-methylthiazole + ATP = 4-methyl-5-(2-phosphooxyethyl)-thiazole + ADP + H(+). It functions in the pathway cofactor biosynthesis; thiamine diphosphate biosynthesis; 4-methyl-5-(2-phosphoethyl)-thiazole from 5-(2-hydroxyethyl)-4-methylthiazole: step 1/1. Functionally, catalyzes the phosphorylation of the hydroxyl group of 4-methyl-5-beta-hydroxyethylthiazole (THZ). This Chloroflexus aurantiacus (strain ATCC 29366 / DSM 635 / J-10-fl) protein is Hydroxyethylthiazole kinase.